Here is a 586-residue protein sequence, read N- to C-terminus: Actin-related protein 9 (586 aa).

The tract at residues 141 to 169 (STPIVDKDADVDPLQRSTPDDTEPNSEEN) is disordered.

This sequence belongs to the actin family. ARP8 subfamily.

The protein is Actin-related protein 9 (ARP9) of Oryza sativa subsp. indica (Rice).